Here is a 222-residue protein sequence, read N- to C-terminus: N-(5'-phosphoribosyl)anthranilate isomerase (222 aa).

It belongs to the TrpF family.

The catalysed reaction is N-(5-phospho-beta-D-ribosyl)anthranilate = 1-(2-carboxyphenylamino)-1-deoxy-D-ribulose 5-phosphate. It functions in the pathway amino-acid biosynthesis; L-tryptophan biosynthesis; L-tryptophan from chorismate: step 3/5. The polypeptide is N-(5'-phosphoribosyl)anthranilate isomerase (Xanthomonas euvesicatoria pv. vesicatoria (strain 85-10) (Xanthomonas campestris pv. vesicatoria)).